A 417-amino-acid polypeptide reads, in one-letter code: MDKIVIHGGNRLKGEVRISGAKNSALPLLFATLLAPGQHQLENVPALRDISTAGKLLSILGAEVHSQEGVFSVDATRIRSVEAPYDLVRTMRASVLVLGPLLARLGHARVSLPGGCAIGARPINLHLKGLEAMGAEIDLDHGYVEARAKRLHGANIYLDIPTVGGTENLLMAACLAQGTTVIENAACEPEIVDLATALTCMGARIEGAGTDRIVVEGVDELQPLHYAVMPDRIEAGTFMVAAAMTRGDVRLLGARQADLEALISKLQEAGVTISAEDHALRVRGPRRIAPVDIKTQPHPGFPTDMQAQFMALMSIADGTSVVTESVFENRFMHVCELQRLGADIAIEGKTAKVRGVKELLGAPVMATDLRASASLVLAGLAAENTTEVSRIYHLDRGYERLEEKFRNLGAHIERIKG.

Residue 22 to 23 participates in phosphoenolpyruvate binding; the sequence is KN. R92 serves as a coordination point for UDP-N-acetyl-alpha-D-glucosamine. C116 functions as the Proton donor in the catalytic mechanism. Position 116 is a 2-(S-cysteinyl)pyruvic acid O-phosphothioketal (C116). Positions 304 and 326 each coordinate UDP-N-acetyl-alpha-D-glucosamine.

This sequence belongs to the EPSP synthase family. MurA subfamily.

It localises to the cytoplasm. It carries out the reaction phosphoenolpyruvate + UDP-N-acetyl-alpha-D-glucosamine = UDP-N-acetyl-3-O-(1-carboxyvinyl)-alpha-D-glucosamine + phosphate. The protein operates within cell wall biogenesis; peptidoglycan biosynthesis. Its function is as follows. Cell wall formation. Adds enolpyruvyl to UDP-N-acetylglucosamine. This Syntrophotalea carbinolica (strain DSM 2380 / NBRC 103641 / GraBd1) (Pelobacter carbinolicus) protein is UDP-N-acetylglucosamine 1-carboxyvinyltransferase.